Consider the following 345-residue polypeptide: Protein RecA (345 aa).

Gly65–Thr72 lines the ATP pocket.

Belongs to the RecA family.

Its subcellular location is the cytoplasm. Its function is as follows. Can catalyze the hydrolysis of ATP in the presence of single-stranded DNA, the ATP-dependent uptake of single-stranded DNA by duplex DNA, and the ATP-dependent hybridization of homologous single-stranded DNAs. It interacts with LexA causing its activation and leading to its autocatalytic cleavage. This is Protein RecA from Hahella chejuensis (strain KCTC 2396).